Reading from the N-terminus, the 205-residue chain is Probable thymidylate kinase (205 aa).

10 to 17 (GIDGSGKT) lines the ATP pocket.

This sequence belongs to the thymidylate kinase family.

It catalyses the reaction dTMP + ATP = dTDP + ADP. The sequence is that of Probable thymidylate kinase (tmk) from Pyrococcus abyssi (strain GE5 / Orsay).